A 1657-amino-acid polypeptide reads, in one-letter code: Putative serine/threonine-protein kinase/receptor R826 (1657 aa).

The N-terminal stretch at M1 to C23 is a signal peptide. N153, N178, N238, N255, N352, N454, N476, N494, and N596 each carry an N-linked (GlcNAc...) asparagine; by host glycan. The helical transmembrane segment at I742–V762 threads the bilayer. One can recognise a Protein kinase 1 domain in the interval L786–M1049. Residues L792–V800 and K813 contribute to the ATP site. Residue D909 is the Proton acceptor of the active site. Residues V1089–N1115 are disordered. The Guanylate cyclase domain maps to V1134–T1277. Residues I1399–F1651 form the Protein kinase 2 domain. ATP-binding positions include I1405–V1413 and K1426. D1522 acts as the Proton acceptor in catalysis.

It localises to the membrane. It carries out the reaction L-seryl-[protein] + ATP = O-phospho-L-seryl-[protein] + ADP + H(+). It catalyses the reaction L-threonyl-[protein] + ATP = O-phospho-L-threonyl-[protein] + ADP + H(+). In Acanthamoeba polyphaga mimivirus (APMV), this protein is Putative serine/threonine-protein kinase/receptor R826.